A 59-amino-acid polypeptide reads, in one-letter code: Ferredoxin-2 (59 aa).

2 4Fe-4S ferredoxin-type domains span residues 3–32 (YSVI…LQNG) and 33–59 (KAVP…AIVE). [4Fe-4S] cluster-binding residues include C12, C15, C18, C22, C42, C45, C48, and C52.

As to quaternary structure, homodimer. It depends on [4Fe-4S] cluster as a cofactor.

The protein resides in the periplasm. Its function is as follows. Ferredoxins are iron-sulfur proteins that transfer electrons in a wide variety of metabolic reactions. This chain is Ferredoxin-2, found in Desulfomicrobium norvegicum (strain DSM 1741 / NCIMB 8310) (Desulfovibrio baculatus (strain Norway 4)).